Here is a 618-residue protein sequence, read N- to C-terminus: GMC oxidoreductase family protein Mala s 12 (618 aa).

Positions 1 to 23 (MKGIVSWAVVSAALVLSATESLA) are cleaved as a signal peptide. Positions 129 and 280 each coordinate FAD. Catalysis depends on H556, which acts as the Proton donor. H599 functions as the Proton acceptor in the catalytic mechanism.

Belongs to the GMC oxidoreductase family. Monomer. Requires FAD as cofactor.

The protein resides in the secreted. The protein is GMC oxidoreductase family protein Mala s 12 of Malassezia sympodialis (strain ATCC 42132) (Atopic eczema-associated yeast).